The following is a 58-amino-acid chain: Small ribosomal subunit protein eS27 (58 aa).

The Zn(2+) site is built by Cys10, Cys13, Cys29, and Cys32. Residues 10 to 32 (CPDCEHEQVIFDHPSTIVKCIIC) form a C4-type zinc finger.

The protein belongs to the eukaryotic ribosomal protein eS27 family. Part of the 30S ribosomal subunit. It depends on Zn(2+) as a cofactor.

The chain is Small ribosomal subunit protein eS27 from Archaeoglobus fulgidus (strain ATCC 49558 / DSM 4304 / JCM 9628 / NBRC 100126 / VC-16).